The following is a 1037-amino-acid chain: Sentrin-specific protease 7 (1037 aa).

Basic residues predominate over residues 1–10 (MDRARPGRRR). 2 disordered regions span residues 1–28 (MDRA…SPAD) and 182–420 (ASLS…SEEN). Residues serine 12, serine 13, serine 25, and serine 189 each carry the phosphoserine modification. Polar residues-rich tracts occupy residues 182–211 (ASLS…NVNH) and 253–263 (TPQSKDFNSGN). Residues 289-299 (VSRKRKKRGRS) show a composition bias toward basic residues. The segment covering 300–309 (NFHNSHNPKS) has biased composition (polar residues). Basic and acidic residues-rich tracts occupy residues 310 to 320 (SVDKSTEYIKE) and 330 to 340 (KLEESNEDSHQ). The segment covering 381–399 (NKSSESSVSSEVAENSSAA) has biased composition (low complexity). Phosphoserine occurs at positions 432 and 433. Residues 747-1037 (LGVTNEDLEC…HLQQQKGSSS (291 aa)) are protease. Histidine 847 is a catalytic residue. Positions 873–910 (EFQDQQSQHDNKTIDNDPHTTSTVFTSAEESQSTETSM) are disordered. Positions 879-890 (SQHDNKTIDNDP) are enriched in basic and acidic residues. Residues 898 to 910 (TSAEESQSTETSM) show a composition bias toward low complexity. Residue aspartate 926 is part of the active site. The active-site Nucleophile is cysteine 979.

This sequence belongs to the peptidase C48 family.

It localises to the cytoplasm. Functionally, protease that acts as a positive regulator of the cGAS-STING pathway by catalyzing desumoylation of CGAS. Desumoylation of CGAS promotes DNA-binding activity of CGAS, subsequent oligomerization and activation. Deconjugates SUMO2 and SUMO3 from targeted proteins, but not SUMO1. Catalyzes the deconjugation of poly-SUMO2 and poly-SUMO3 chains. Has very low efficiency in processing full-length SUMO proteins to their mature forms. This is Sentrin-specific protease 7 (Senp7) from Rattus norvegicus (Rat).